The following is a 1461-amino-acid chain: Autotransporter adhesin SadA (1461 aa).

The N-terminal stretch at 1–54 is a signal peptide; it reads MNRIFKVLWNAATGTFVVTSETAKSRGKKNGRRKLAVSALIGLSSIMVSADALA. The interval 55–1372 is surface exposed passenger domain; it reads NAGNDTGDGV…EEANTYTDQK (1318 aa). Residues 1373 to 1461 form a translocator domain region; that stretch reads MGEMNSKIKG…SAAIGAGFQW (89 aa). Beta stranded transmembrane passes span 1407–1417, 1421–1431, 1440–1446, and 1450–1461; these read GANMTSIAGGT, ESAVAIGVSMV, KLQGTSN, and DYSAAIGAGFQW.

Belongs to the autotransporter-2 (AT-2) (TC 1.B.40) family. Homotrimer.

The protein resides in the cell surface. Its subcellular location is the cell outer membrane. Functionally, involved in cell aggregation, biofilm formation, and adhesion to human intestinal epithelial cells. The protein is Autotransporter adhesin SadA of Salmonella typhimurium (strain LT2 / SGSC1412 / ATCC 700720).